The following is a 114-amino-acid chain: PDZK1-interacting protein 1 (114 aa).

Over 1–28 (MSALSLLILGLLTAVPPASCQQGLGNLQ) the chain is Extracellular. A helical transmembrane segment spans residues 29–51 (PWMQGLIAVAVFLVLVAIAFAVN). Residues 52 to 114 (HFWCQEEPEP…EEGKVRSTPM (63 aa)) are Cytoplasmic-facing. A Phosphoserine modification is found at Ser85. A disordered region spans residues 94 to 114 (EHENAYENVPEEEGKVRSTPM). Residues 105 to 114 (EEGKVRSTPM) are compositionally biased toward basic and acidic residues.

Belongs to the PDZK1-interacting protein 1/SMIM24 family. Forms a heterodimer (via N-terminal transmembrane helix) with SLC5A2/SGLT2 (via TM13); this interaction enhances SLC5A2 transporter activity. Interacts with PDZK1.

It is found in the apical cell membrane. Functionally, auxiliary protein of electrogenic Na(+)-coupled sugar symporter SLC5A2/SGLT2 and SLC5A1/SGLT1. Essential for the transporter activity of SLC5A2/SGLT2 but not SLC5A1/SGLT1. This chain is PDZK1-interacting protein 1, found in Homo sapiens (Human).